The primary structure comprises 186 residues: Glutathione S-transferase 1, isoform A (186 aa).

One can recognise a GST N-terminal domain in the interval 1 to 81 (MDFYYLPGSA…YLVEKYCAHD (81 aa)). Glutathione contacts are provided by residues Ser-9, 50–52 (HCI), and 65–67 (ESR). Residues 92–186 (DPRRRAVVHQ…RRCRVRSAAI (95 aa)) form the GST C-terminal domain.

Belongs to the GST superfamily. Theta family. As to quaternary structure, homodimer.

The catalysed reaction is RX + glutathione = an S-substituted glutathione + a halide anion + H(+). Its function is as follows. Conjugation of reduced glutathione to a wide number of exogenous and endogenous hydrophobic electrophiles. The polypeptide is Glutathione S-transferase 1, isoform A (Anopheles gambiae (African malaria mosquito)).